A 284-amino-acid chain; its full sequence is Bifunctional protein FolD (284 aa).

NADP(+)-binding positions include 165–167, Thr-192, and Val-233; that span reads GRG.

Belongs to the tetrahydrofolate dehydrogenase/cyclohydrolase family. Homodimer.

It catalyses the reaction (6R)-5,10-methylene-5,6,7,8-tetrahydrofolate + NADP(+) = (6R)-5,10-methenyltetrahydrofolate + NADPH. The catalysed reaction is (6R)-5,10-methenyltetrahydrofolate + H2O = (6R)-10-formyltetrahydrofolate + H(+). Its pathway is one-carbon metabolism; tetrahydrofolate interconversion. In terms of biological role, catalyzes the oxidation of 5,10-methylenetetrahydrofolate to 5,10-methenyltetrahydrofolate and then the hydrolysis of 5,10-methenyltetrahydrofolate to 10-formyltetrahydrofolate. The protein is Bifunctional protein FolD of Corynebacterium efficiens (strain DSM 44549 / YS-314 / AJ 12310 / JCM 11189 / NBRC 100395).